The chain runs to 85 residues: DNA-directed RNA polymerase subunit beta'' (85 aa).

The protein belongs to the RNA polymerase beta' chain family. RpoC2 subfamily. In terms of assembly, in plastids the minimal PEP RNA polymerase catalytic core is composed of four subunits: alpha, beta, beta', and beta''. When a (nuclear-encoded) sigma factor is associated with the core the holoenzyme is formed, which can initiate transcription.

The protein resides in the plastid. The protein localises to the chloroplast. It catalyses the reaction RNA(n) + a ribonucleoside 5'-triphosphate = RNA(n+1) + diphosphate. DNA-dependent RNA polymerase catalyzes the transcription of DNA into RNA using the four ribonucleoside triphosphates as substrates. The chain is DNA-directed RNA polymerase subunit beta'' (rpoC2) from Galdieria sulphuraria (Red alga).